The following is a 328-amino-acid chain: Transcription factor bHLH25 (328 aa).

The segment at 125–152 is disordered; that stretch reads PHQKSDEFNRKGTKRAQPFSRNQSNAQD. One can recognise a bHLH domain in the interval 148–197; it reads SNAQDHIIAERKRREKLTQRFVALSALVPGLKKMDKASVLGDALKHIKYL.

In terms of assembly, homodimer. As to expression, expressed in flowers.

Its subcellular location is the nucleus. The protein is Transcription factor bHLH25 (BHLH25) of Arabidopsis thaliana (Mouse-ear cress).